We begin with the raw amino-acid sequence, 674 residues long: Tripartite terminase subunit 3 (674 aa).

A Walker A motif motif is present at residues 212-219; it reads VPRRHGKT. The Walker B motif signature appears at 305–310; the sequence is LLLVDE. Glutamate 310 functions as the For ATPase activity in the catalytic mechanism. Active-site for nuclease activity residues include aspartate 463 and glutamate 534. Residues 580–600 are required for interaction with UL56 and DNA packaging; the sequence is GRDKALAVEQFISRFNSGYIK. The active-site For nuclease activity is the aspartate 651.

It belongs to the herpesviridae TRM3 protein family. As to quaternary structure, interacts with the terminase subunits TRM1 and TRM2. Interacts with portal protein.

It localises to the host nucleus. In terms of biological role, component of the molecular motor that translocates viral genomic DNA in empty capsid during DNA packaging. Forms a tripartite terminase complex together with TRM1 and TRM2 in the host cytoplasm. Once the complex reaches the host nucleus, it interacts with the capsid portal vertex. This portal forms a ring in which genomic DNA is translocated into the capsid. TRM3 carries an RNase H-like nuclease activity that plays an important role for the cleavage of concatemeric viral DNA into unit length genomes. The polypeptide is Tripartite terminase subunit 3 (Homo sapiens (Human)).